A 933-amino-acid chain; its full sequence is MNSGTTLHLDRLSLETPSERTCFCIKCWESVPSTSQVWFGGKCWHSDCFKCVNCNKKLDPSSEDFSQDDQKQIFCKLCVDICNGCSTPICEFNAVSNSQANHPCCSNCRAFINSNAFGKFKGQHYCLPCLRKQDEENQKAVMESASGFIPLRNIAQTAENTSLTGQNQGFQNPHFIASDSPSSVLSGRMQNTSSPTNSLRPQLKVQTNGYETPGDINSAKSYKDIQKDFLLKPKNSFVKTSPSPLANGPSFRSANASPFDSCDSFHSGSSIPIEPVSSRQSSVVNNNSVQQPVAYHAFVQSPTENGTLPQLPKNESVVNPPPLRRSSTMNYKSVSTTTSPSKYGYVSGRIALSPIHLRGALRDVTNKCNLKVPRNRNSLSNLDEYYVNGLESDETPTKARFPRYPTVFNKLDDKRLSSEPNGLKKRLTNSSNYEASPRAKSLNLSQVSLHQACEPEYNRSSLVRASDVFTSNVFDATEESANELAIRISELQAEVGTLLLEATSLASIIEQQTPVSPEAFKQELVADLNYRLDYLRKSFQPELSTLLLRRDALSTTVSKLQNAYSTVMEETAYLNVKNTELVSLNNQLERELAYLREQQHKKRTSSSFGIFNNDKKSNRTISTPSPRESFSRLQMVASSLGFRPKDNKDKESGGYNKRNSKIDLKKSFSKRFHWKRDSPHMSSTPSISEEHLASEEQEDFVPAVGHCKLCGKYSNELRAHYQDCVSSTIDRQYQSKKSESPVWALNPDDFDQNRLTLLRVPTLIVSCINFIESYGMDFEGLYRKSGATSQMKKIVALLRNEDTVLDPSEDISAVTSVFKQYLRNLPNPIITYDQYFPFITAANCASFQDKLDGFIMVIKSLPPAHAEILQLIIRHLARVAAYSHANRMTSKNLAVVFSPTLIRDPDNSRDVIDMTVKNYSLAFLIDHVHEVFA.

LIM zinc-binding domains are found at residues 22-80 (CFCI…LCVD) and 81-129 (ICNG…CLPC). Disordered stretches follow at residues 181–200 (PSSVLSGRMQNTSSPTNSLR) and 304–338 (ENGTLPQLPKNESVVNPPPLRRSSTMNYKSVSTTT). A compositionally biased stretch (polar residues) spans 325-338 (RSSTMNYKSVSTTT). Ser-353 carries the phosphoserine modification. 3 disordered regions span residues 415-435 (RLSSEPNGLKKRLTNSSNYEA), 605-628 (SSSFGIFNNDKKSNRTISTPSPRE), and 641-660 (GFRPKDNKDKESGGYNKRNS). The span at 619 to 628 (RTISTPSPRE) shows a compositional bias: polar residues. Ser-625 carries the phosphoserine modification. Residues 643 to 652 (RPKDNKDKES) are compositionally biased toward basic and acidic residues. 2 positions are modified to phosphoserine: Ser-738 and Ser-740. One can recognise a Rho-GAP domain in the interval 753-932 (NRLTLLRVPT…FLIDHVHEVF (180 aa)).

GTPase-activating protein for Rho-type proteins. This is Probable Rho-type GTPase-activating protein 4 (rga4) from Schizosaccharomyces pombe (strain 972 / ATCC 24843) (Fission yeast).